A 247-amino-acid chain; its full sequence is GTP cyclohydrolase 1 type 2 homolog (247 aa).

Residues histidine 63, histidine 64, aspartate 101, histidine 215, and glutamate 219 each contribute to the a divalent metal cation site.

The protein belongs to the GTP cyclohydrolase I type 2/NIF3 family. Toroid-shaped homohexamer. In the hexamer, 3 dimers assemble to form a ring-like structure surrounding a central hole.

Provides significant protection from radiation damage and may be involved in the degradation of radiation-damaged nucleotides. The chain is GTP cyclohydrolase 1 type 2 homolog (ybgI) from Salmonella typhi.